Consider the following 341-residue polypeptide: S-adenosylmethionine:tRNA ribosyltransferase-isomerase (341 aa).

It belongs to the QueA family. As to quaternary structure, monomer.

The protein localises to the cytoplasm. The enzyme catalyses 7-aminomethyl-7-carbaguanosine(34) in tRNA + S-adenosyl-L-methionine = epoxyqueuosine(34) in tRNA + adenine + L-methionine + 2 H(+). It participates in tRNA modification; tRNA-queuosine biosynthesis. Functionally, transfers and isomerizes the ribose moiety from AdoMet to the 7-aminomethyl group of 7-deazaguanine (preQ1-tRNA) to give epoxyqueuosine (oQ-tRNA). This Chlorobium luteolum (strain DSM 273 / BCRC 81028 / 2530) (Pelodictyon luteolum) protein is S-adenosylmethionine:tRNA ribosyltransferase-isomerase.